The chain runs to 192 residues: Fe/S biogenesis protein NfuA (192 aa).

Positions 149 and 152 each coordinate [4Fe-4S] cluster.

The protein belongs to the NfuA family. Homodimer. Requires [4Fe-4S] cluster as cofactor.

Its function is as follows. Involved in iron-sulfur cluster biogenesis. Binds a 4Fe-4S cluster, can transfer this cluster to apoproteins, and thereby intervenes in the maturation of Fe/S proteins. Could also act as a scaffold/chaperone for damaged Fe/S proteins. This is Fe/S biogenesis protein NfuA from Shewanella amazonensis (strain ATCC BAA-1098 / SB2B).